We begin with the raw amino-acid sequence, 202 residues long: Small ribosomal subunit protein uS4c (202 aa).

Residues Met90–Asn152 form the S4 RNA-binding domain.

It belongs to the universal ribosomal protein uS4 family. Part of the 30S ribosomal subunit. Contacts protein S5. The interaction surface between S4 and S5 is involved in control of translational fidelity.

The protein localises to the plastid. It is found in the chloroplast. Its function is as follows. One of the primary rRNA binding proteins, it binds directly to 16S rRNA where it nucleates assembly of the body of the 30S subunit. With S5 and S12 plays an important role in translational accuracy. This is Small ribosomal subunit protein uS4c (rps4) from Dendrohypopterygium filiculiforme (Moss).